The chain runs to 331 residues: DNA-directed RNA polymerase subunit alpha (331 aa).

Positions 1–246 are alpha N-terminal domain (alpha-NTD); that stretch reads MMQTSRTLHN…GLFSPLQEVS (246 aa). The segment at 256 to 331 is alpha C-terminal domain (alpha-CTD); sequence AEDNQKNQIP…LTLPRERSKT (76 aa).

The protein belongs to the RNA polymerase alpha chain family. As to quaternary structure, in cyanobacteria the RNAP catalytic core is composed of 2 alpha, 1 beta, 1 beta', 1 gamma and 1 omega subunit. When a sigma factor is associated with the core the holoenzyme is formed, which can initiate transcription.

The catalysed reaction is RNA(n) + a ribonucleoside 5'-triphosphate = RNA(n+1) + diphosphate. Its function is as follows. DNA-dependent RNA polymerase catalyzes the transcription of DNA into RNA using the four ribonucleoside triphosphates as substrates. The chain is DNA-directed RNA polymerase subunit alpha from Synechococcus sp. (strain JA-3-3Ab) (Cyanobacteria bacterium Yellowstone A-Prime).